A 219-amino-acid chain; its full sequence is tRNA (guanine-N(7)-)-methyltransferase (219 aa).

S-adenosyl-L-methionine contacts are provided by glutamate 46, glutamate 71, aspartate 100, and aspartate 122. Aspartate 122 is an active-site residue. Residue lysine 126 coordinates substrate. The segment at 128–133 is interaction with RNA; sequence KHEKRR. Substrate-binding positions include aspartate 158 and 199–202; that span reads TEYE.

It belongs to the class I-like SAM-binding methyltransferase superfamily. TrmB family.

The catalysed reaction is guanosine(46) in tRNA + S-adenosyl-L-methionine = N(7)-methylguanosine(46) in tRNA + S-adenosyl-L-homocysteine. Its pathway is tRNA modification; N(7)-methylguanine-tRNA biosynthesis. In terms of biological role, catalyzes the formation of N(7)-methylguanine at position 46 (m7G46) in tRNA. This is tRNA (guanine-N(7)-)-methyltransferase from Oenococcus oeni (strain ATCC BAA-331 / PSU-1).